Here is a 335-residue protein sequence, read N- to C-terminus: AA9 family lytic polysaccharide monooxygenase A (335 aa).

The N-terminal stretch at 1 to 21 (MSSFITKTVLAALVAAAGVRA) is a signal peptide. Positions 22 and 107 each coordinate Cu(2+). Cysteines 77 and 196 form a disulfide. Positions 182 and 191 each coordinate O2. Cu(2+) is bound at residue Tyr-193. Residues 241 to 335 (PKMNIAGGSS…ARRHARDMMN (95 aa)) are disordered. Over residues 251–303 (GAAPSTPATPTTGSGSDTPSNTAAPVESAPAESAAPVESAPAAGNGNQNNGGA) the composition is skewed to low complexity. Residues 321–335 (CKAKKARRHARDMMN) show a composition bias toward basic residues.

The protein belongs to the polysaccharide monooxygenase AA9 family. Cu(2+) serves as cofactor.

The protein resides in the secreted. It carries out the reaction [(1-&gt;4)-beta-D-glucosyl]n+m + reduced acceptor + O2 = 4-dehydro-beta-D-glucosyl-[(1-&gt;4)-beta-D-glucosyl]n-1 + [(1-&gt;4)-beta-D-glucosyl]m + acceptor + H2O.. In terms of biological role, lytic polysaccharide monooxygenase (LPMO) that depolymerizes crystalline and amorphous polysaccharides via the oxidation of scissile alpha- or beta-(1-4)-glycosidic bonds, yielding C1 or C4 oxidation products. Catalysis by LPMOs requires the reduction of the active-site copper from Cu(II) to Cu(I) by a reducing agent and H(2)O(2) or O(2) as a cosubstrate. Is capable of cleaving cellulose, but not chitin. Is also active on tamarind xyloglucan and longer xyloglucan oligosaccharides. Has no activity toward shorter cellooligosaccharides (Glc3-6), as well as toward the xyloglucan-heptamer, birchwood xylan, wheat arabinoxylan, konjac glucomannan, ivory nut mannan, beta-glucan from barley, lichenan from Icelandic moss, starch, and spruce galactoglucomannan. Has unprecedented broad specificity on xyloglucan, cleaving any glycosidicbond in theb-glucan main chain, regardless of xylosyl substitutions. When incubated with a mixture of xyloglucan and cellulose, efficiently attacks the xyloglucan, whereas cellulose conversion is inhibited, suggesting that removal of hemicellulose may be the true function of this LPMO during biomass conversion. This Gibberella zeae (strain ATCC MYA-4620 / CBS 123657 / FGSC 9075 / NRRL 31084 / PH-1) (Wheat head blight fungus) protein is AA9 family lytic polysaccharide monooxygenase A.